Consider the following 507-residue polypeptide: FSD1-like protein (507 aa).

Residues Lys-70–Glu-109 adopt a coiled-coil conformation. The COS domain occupies Leu-105–Leu-162. The Fibronectin type-III domain occupies Val-164–Leu-268. One can recognise a B30.2/SPRY domain in the interval Asp-291 to Ala-484. The disordered stretch occupies residues Pro-292–Phe-345. The span at Gln-298–Gly-309 shows a compositional bias: basic and acidic residues. The span at Ser-321–Gly-332 shows a compositional bias: polar residues. Phosphoserine occurs at positions 498 and 501.

This Mus musculus (Mouse) protein is FSD1-like protein (Fsd1l).